A 126-amino-acid chain; its full sequence is MAIIGIGTDIVEIERIREQRDRLGDKLAKRVLTLDELAIYAAVNMPERYLAKRFAAKEAAAKALGTGIGRGVSFQHIHISNDDNGAPLVNFTDGAALRLAQLGGCKGHISIADEKHYAIATVILES.

Residues Asp-9 and Glu-58 each contribute to the Mg(2+) site.

Belongs to the P-Pant transferase superfamily. AcpS family. Mg(2+) serves as cofactor.

Its subcellular location is the cytoplasm. It catalyses the reaction apo-[ACP] + CoA = holo-[ACP] + adenosine 3',5'-bisphosphate + H(+). Transfers the 4'-phosphopantetheine moiety from coenzyme A to a Ser of acyl-carrier-protein. This Shewanella denitrificans (strain OS217 / ATCC BAA-1090 / DSM 15013) protein is Holo-[acyl-carrier-protein] synthase.